Here is a 438-residue protein sequence, read N- to C-terminus: tRNA(Ile)-lysidine synthase (438 aa).

Position 27-32 (27-32 (SGGVDS)) interacts with ATP.

It belongs to the tRNA(Ile)-lysidine synthase family.

It localises to the cytoplasm. It carries out the reaction cytidine(34) in tRNA(Ile2) + L-lysine + ATP = lysidine(34) in tRNA(Ile2) + AMP + diphosphate + H(+). Functionally, ligates lysine onto the cytidine present at position 34 of the AUA codon-specific tRNA(Ile) that contains the anticodon CAU, in an ATP-dependent manner. Cytidine is converted to lysidine, thus changing the amino acid specificity of the tRNA from methionine to isoleucine. This is tRNA(Ile)-lysidine synthase from Vibrio parahaemolyticus serotype O3:K6 (strain RIMD 2210633).